A 435-amino-acid polypeptide reads, in one-letter code: Elongation factor 1-alpha (435 aa).

A tr-type G domain is found at 4 to 229 (KPHLNLIVIG…DMLEIPPKPV (226 aa)). Residues 13-20 (GHVDHGKS) form a G1 region. GTP is bound at residue 13–20 (GHVDHGKS). Mg(2+) is bound at residue S20. Residues 69–73 (GVTIN) form a G2 region. The segment at 90–93 (DAPG) is G3. GTP is bound by residues 90–94 (DAPGH) and 152–155 (TKMD). Residues 152–155 (TKMD) form a G4 region. A G5 region spans residues 193 to 195 (VSI).

The protein belongs to the TRAFAC class translation factor GTPase superfamily. Classic translation factor GTPase family. EF-Tu/EF-1A subfamily.

It localises to the cytoplasm. It catalyses the reaction GTP + H2O = GDP + phosphate + H(+). Its function is as follows. GTP hydrolase that promotes the GTP-dependent binding of aminoacyl-tRNA to the A-site of ribosomes during protein biosynthesis. The sequence is that of Elongation factor 1-alpha from Metallosphaera sedula (strain ATCC 51363 / DSM 5348 / JCM 9185 / NBRC 15509 / TH2).